The chain runs to 395 residues: Elongation factor Tu (395 aa).

The tr-type G domain maps to 10 to 204 (KPHVNIGTIG…EVDAYIPTPE (195 aa)). Residues 19–26 (GHVDHGKT) are G1. 19 to 26 (GHVDHGKT) provides a ligand contact to GTP. Threonine 26 is a binding site for Mg(2+). A G2 region spans residues 60 to 64 (GITIS). Positions 81–84 (DCPG) are G3. GTP-binding positions include 81-85 (DCPGH) and 136-139 (NKCD). Residues 136–139 (NKCD) are G4. Positions 174–176 (SAL) are G5.

Belongs to the TRAFAC class translation factor GTPase superfamily. Classic translation factor GTPase family. EF-Tu/EF-1A subfamily. As to quaternary structure, monomer.

It is found in the cytoplasm. The catalysed reaction is GTP + H2O = GDP + phosphate + H(+). In terms of biological role, GTP hydrolase that promotes the GTP-dependent binding of aminoacyl-tRNA to the A-site of ribosomes during protein biosynthesis. The chain is Elongation factor Tu from Bacillus cereus (strain G9842).